The following is a 187-amino-acid chain: UPF0215 protein PAE0952 (187 aa).

Belongs to the UPF0215 family.

This chain is UPF0215 protein PAE0952, found in Pyrobaculum aerophilum (strain ATCC 51768 / DSM 7523 / JCM 9630 / CIP 104966 / NBRC 100827 / IM2).